Consider the following 143-residue polypeptide: Transcriptional regulator MraZ (143 aa).

2 SpoVT-AbrB domains span residues 5–47 and 76–119; these read TYTP…PRAE and TDEQ…DAAA.

The protein belongs to the MraZ family. As to quaternary structure, forms oligomers.

It localises to the cytoplasm. The protein resides in the nucleoid. The chain is Transcriptional regulator MraZ from Mycobacterium sp. (strain JLS).